A 338-amino-acid chain; its full sequence is Ketol-acid reductoisomerase (NADP(+)) (338 aa).

The 181-residue stretch at 3-183 folds into the KARI N-terminal Rossmann domain; the sequence is IDVFYDDDAD…GGARAGVIPT (181 aa). NADP(+) is bound by residues 26-29, Arg49, Ser52, Ser54, and 84-87; these read YGSQ and DTSQ. His109 is a catalytic residue. Gly135 lines the NADP(+) pocket. The KARI C-terminal knotted domain occupies 184 to 329; it reads TFEAETVTDL…AKLRDLMSWV (146 aa). Mg(2+) is bound by residues Asp192, Glu196, Glu228, and Glu232. Ser253 lines the substrate pocket.

Belongs to the ketol-acid reductoisomerase family. The cofactor is Mg(2+).

The catalysed reaction is (2R)-2,3-dihydroxy-3-methylbutanoate + NADP(+) = (2S)-2-acetolactate + NADPH + H(+). It catalyses the reaction (2R,3R)-2,3-dihydroxy-3-methylpentanoate + NADP(+) = (S)-2-ethyl-2-hydroxy-3-oxobutanoate + NADPH + H(+). Its pathway is amino-acid biosynthesis; L-isoleucine biosynthesis; L-isoleucine from 2-oxobutanoate: step 2/4. The protein operates within amino-acid biosynthesis; L-valine biosynthesis; L-valine from pyruvate: step 2/4. Functionally, involved in the biosynthesis of branched-chain amino acids (BCAA). Catalyzes an alkyl-migration followed by a ketol-acid reduction of (S)-2-acetolactate (S2AL) to yield (R)-2,3-dihydroxy-isovalerate. In the isomerase reaction, S2AL is rearranged via a Mg-dependent methyl migration to produce 3-hydroxy-3-methyl-2-ketobutyrate (HMKB). In the reductase reaction, this 2-ketoacid undergoes a metal-dependent reduction by NADPH to yield (R)-2,3-dihydroxy-isovalerate. This chain is Ketol-acid reductoisomerase (NADP(+)), found in Corynebacterium jeikeium (strain K411).